Consider the following 238-residue polypeptide: COMM domain-containing protein 10 homolog Vlet (238 aa).

Positions 43-77 are enriched in low complexity; sequence ASASATSSTVGTSVTTTGRVDSSTEENPTSNTEPE. The interval 43 to 78 is disordered; it reads ASASATSSTVGTSVTTTGRVDSSTEENPTSNTEPEY. Residues 161–225 form the COMM domain; the sequence is VIEDVAWKLN…SIQGELDAML (65 aa).

This sequence belongs to the COMM domain-containing protein 10 family. As to quaternary structure, component of the commander complex consisting of the CCC subcomplex and the retriever subcomplex. Component of the CCC subcomplex. Interacts with Smn; along with Sbat and Hez may form an accessory subcomplex involved in SMN complex function.

Functionally, scaffold protein in the commander complex that is essential for endosomal recycling of transmembrane cargos; the commander complex is composed of the CCC subcomplex and the retriever subcomplex. May modulate activity of cullin-RING E3 ubiquitin ligase (CRL) complexes. May down-regulate activation of NF-kappa-B. May have an accessory function in the survival motor neuron (SMN) complex. Required for neuromuscular function and organismal viability. This is COMM domain-containing protein 10 homolog Vlet from Drosophila melanogaster (Fruit fly).